Consider the following 396-residue polypeptide: Major outer membrane porin, serovar A (396 aa).

Positions 1–22 are cleaved as a signal peptide; the sequence is MKKLLKSVLVFAALSSASSLQA.

It belongs to the chlamydial porin (CP) (TC 1.B.2) family. In terms of assembly, part of a disulfide cross-linked outer membrane complex (COMC) composed of the major outer membrane porin (MOMP), the small cysteine-rich protein (OmcA) and the large cysteine-rich periplasmic protein (OmcB).

It localises to the cell outer membrane. In elementary bodies (EBs, the infectious stage, which is able to survive outside the host cell) provides the structural integrity of the outer envelope through disulfide cross-links with the small cysteine-rich protein and the large cysteine-rich periplasmic protein. It has been described in publications as the Sarkosyl-insoluble COMC (Chlamydia outer membrane complex), and serves as the functional equivalent of peptidoglycan. Functionally, permits diffusion of specific solutes through the outer membrane. The protein is Major outer membrane porin, serovar A (ompA) of Chlamydia trachomatis.